The chain runs to 84 residues: Sulfur carrier protein TusA (84 aa).

Residue Cys-19 is the Cysteine persulfide intermediate of the active site.

The protein belongs to the sulfur carrier protein TusA family. As to quaternary structure, interacts with IscS.

It is found in the cytoplasm. Its pathway is tRNA modification. In terms of biological role, sulfur carrier protein involved in sulfur trafficking in the cell. Part of a sulfur-relay system required for 2-thiolation during synthesis of 2-thiouridine of the modified wobble base 5-methylaminomethyl-2-thiouridine (mnm(5)s(2)U) in tRNA. Interacts with IscS and stimulates its cysteine desulfurase activity. Accepts an activated sulfur from IscS, which is then transferred to TusD, and thus determines the direction of sulfur flow from IscS to 2-thiouridine formation. Also appears to be involved in sulfur transfer for the biosynthesis of molybdopterin. This chain is Sulfur carrier protein TusA, found in Yersinia pseudotuberculosis serotype O:1b (strain IP 31758).